A 5058-amino-acid polypeptide reads, in one-letter code: ATP-binding cassette sub-family A member 13 (5058 aa).

7 helical membrane-spanning segments follow: residues 23–43 (PVLF…LTVL), 3568–3588 (VGFF…ASMV), 3607–3627 (GVHP…VLTI), 3648–3668 (FIVF…SYLL), 3679–3699 (ALCT…LLVL), 3709–3729 (TFLC…ITFL), and 3752–3772 (FGWV…CGWY). Residues 3842-4074 (VTLVSVTKEY…YGQGLRLTLT (233 aa)) form the ABC transporter 1 domain. 3875 to 3882 (GTNGAGKT) is an ATP binding site. 7 consecutive transmembrane segments (helical) span residues 4226–4246 (TLAD…LFMV), 4458–4478 (VALC…SSVV), 4504–4524 (FLYD…VIVA), 4536–4556 (LAAT…WMYL), 4568–4588 (FISY…ITIM), 4607–4627 (VLKW…LVEL), and 4651–4671 (MNFL…LLLL). The ABC transporter 2 domain maps to 4718–4956 (LVLYNLSKHY…FGDGYTVKVW (239 aa)). Residue 4754–4761 (GVNGAGKS) participates in ATP binding.

This sequence belongs to the ABC transporter superfamily. Significantly expressed in the bone marrow, trachea, testis, thyroid and lung as well as in skin fibroblasts.

The protein resides in the cytoplasmic vesicle membrane. It carries out the reaction cholesterol(in) + ATP + H2O = cholesterol(out) + ADP + phosphate + H(+). Its function is as follows. May mediate the cholesterol and gangliosides transport from the plasma membrane to intracellular vesicles in an ATP hydrolysis dependent manner, thus playing a role in their internalization by endocytic retrograde transport and may also participate in the endocytosis of synaptic vesicle in cortical neurons. The sequence is that of ATP-binding cassette sub-family A member 13 from Homo sapiens (Human).